The following is a 244-amino-acid chain: tRNA (guanine-N(1)-)-methyltransferase (244 aa).

Residues Gly113 and 133 to 138 (IGDYVL) contribute to the S-adenosyl-L-methionine site.

This sequence belongs to the RNA methyltransferase TrmD family. Homodimer.

It is found in the cytoplasm. It catalyses the reaction guanosine(37) in tRNA + S-adenosyl-L-methionine = N(1)-methylguanosine(37) in tRNA + S-adenosyl-L-homocysteine + H(+). Its function is as follows. Specifically methylates guanosine-37 in various tRNAs. In Bacillus cereus (strain B4264), this protein is tRNA (guanine-N(1)-)-methyltransferase.